Here is a 156-residue protein sequence, read N- to C-terminus: Keratin, high-sulfur matrix protein, B2B (156 aa).

The residue at position 1 (alanine 1) is an N-acetylalanine. 4 consecutive repeats follow at residues 26 to 35 (PTCSQTSCCQ), 36 to 45 (PTSIQTSCCQ), 46 to 55 (PISIQTSCCQ), and 56 to 65 (PTCLQTSGCE).

In terms of biological role, the keratin products of mammalian epidermal derivatives such as wool and hair consist of microfibrils embedded in a rigid matrix of other proteins. The matrix proteins include the high-sulfur and high-tyrosine keratins, having molecular weights of 6-20 kDa, whereas the microfibrils contain the larger, low-sulfur keratins (40-56 kDa). The polypeptide is Keratin, high-sulfur matrix protein, B2B (Ovis aries (Sheep)).